A 197-amino-acid polypeptide reads, in one-letter code: C-type lectin domain family 3 member A (197 aa).

Residues 1-24 (MAKNGLVIYILVITLLLDQTSCHA) form the signal peptide. Disulfide bonds link C68-C78, C95-C191, and C167-C183. The C-type lectin domain maps to 74-192 (FHKKCYLAAE…CHSSKRYICE (119 aa)).

It localises to the secreted. Functionally, promotes cell adhesion to laminin and fibronectin. This chain is C-type lectin domain family 3 member A (CLEC3A), found in Bos taurus (Bovine).